Consider the following 213-residue polypeptide: Imidazole glycerol phosphate synthase subunit HisH 1 (213 aa).

The Glutamine amidotransferase type-1 domain maps to S3 to I213. C81 (nucleophile) is an active-site residue. Active-site residues include H195 and E197.

In terms of assembly, heterodimer of HisH and HisF.

The protein localises to the cytoplasm. It carries out the reaction 5-[(5-phospho-1-deoxy-D-ribulos-1-ylimino)methylamino]-1-(5-phospho-beta-D-ribosyl)imidazole-4-carboxamide + L-glutamine = D-erythro-1-(imidazol-4-yl)glycerol 3-phosphate + 5-amino-1-(5-phospho-beta-D-ribosyl)imidazole-4-carboxamide + L-glutamate + H(+). The enzyme catalyses L-glutamine + H2O = L-glutamate + NH4(+). The protein operates within amino-acid biosynthesis; L-histidine biosynthesis; L-histidine from 5-phospho-alpha-D-ribose 1-diphosphate: step 5/9. IGPS catalyzes the conversion of PRFAR and glutamine to IGP, AICAR and glutamate. The HisH subunit provides the glutamine amidotransferase activity that produces the ammonia necessary to HisF for the synthesis of IGP and AICAR. The sequence is that of Imidazole glycerol phosphate synthase subunit HisH 1 from Legionella pneumophila (strain Paris).